The sequence spans 387 residues: Carboxyaminopropylagmatine decarboxylase (387 aa).

At Lys52 the chain carries N6-(pyridoxal phosphate)lysine.

This sequence belongs to the Orn/Lys/Arg decarboxylase class-II family. Pyridoxal 5'-phosphate is required as a cofactor.

The catalysed reaction is N(1)-[(S)-3-amino-3-carboxypropyl]agmatine + H(+) = N(1)-(3-aminopropyl)agmatine + CO2. Its pathway is amine and polyamine biosynthesis; spermidine biosynthesis. Decarboxylase involved in the biosynthesis of spermidine via the carboxyaminopropylagmatine (CAPA) pathway. Catalyzes the decarboxylation of CAPA to form aminopropylagmatine (APA). Can also decarboxylate carboxyspermidine and carboxynorspermidine, but not ornithine, arginine, lysine and meso-diaminopimelate. The chain is Carboxyaminopropylagmatine decarboxylase from Synechocystis sp. (strain ATCC 27184 / PCC 6803 / Kazusa).